A 179-amino-acid polypeptide reads, in one-letter code: Large ribosomal subunit protein eL18 (179 aa).

The protein belongs to the eukaryotic ribosomal protein eL18 family. As to quaternary structure, component of the large ribosomal subunit.

It localises to the cytoplasm. The protein localises to the cytosol. Its subcellular location is the rough endoplasmic reticulum. In terms of biological role, component of the large ribosomal subunit. The ribosome is a large ribonucleoprotein complex responsible for the synthesis of proteins in the cell. This chain is Large ribosomal subunit protein eL18 (rpl18), found in Salmo salar (Atlantic salmon).